The primary structure comprises 817 residues: Kinesin-like protein 2 (817 aa).

A disordered region spans residues 1 to 155 (MEEEGHKSLT…YNDEKSVNAS (155 aa)). The span at 8–23 (SLTSHLPQSSSSLSQS) shows a compositional bias: low complexity. Positions 39 to 60 (IKTNSSSSNILKPRLSLQNEVN) are enriched in polar residues. Positions 76–86 (SLASVKSSSLA) are enriched in low complexity. The span at 106-116 (PISSRSVSASS) shows a compositional bias: polar residues. Low complexity predominate over residues 122–132 (ASAVSSSLNSS). The stretch at 155 to 242 (SALRTTEDRL…VSQKGMESLE (88 aa)) forms a coiled coil. ATP-binding residues include Asn-473, Arg-475, Arg-479, Glu-543, Gly-566, Ser-567, Gly-568, Lys-569, Thr-570, and Thr-778. In terms of domain architecture, Kinesin motor spans 473 to 807 (NIRVFCRVRP…LRFATKVNNT (335 aa)).

The protein belongs to the TRAFAC class myosin-kinesin ATPase superfamily. Kinesin family. NCD subfamily.

It is found in the cytoplasm. The protein resides in the cytoskeleton. Its subcellular location is the spindle. It localises to the nucleus. It carries out the reaction ATP + H2O = ADP + phosphate + H(+). It catalyses the reaction ATP + H2O + a kinesin associated with a microtubule at position (n) = ADP + phosphate + a kinesin associated with a microtubule at position (n-1, toward the minus end).. Minus end-directed microtubule (MT) motor that is involved in spindle microtubule shortening, kinetochore capture, and polarization of cytoplasmic microtubules. During mitosis, promotes spindle microtubule shortening by depolymerization. During metaphase, involved in the recapture of kinetochores displaced from the spindle and their transport towards the spindle pole body; promotes transport both by microtubule end-on pulling and by lateral sliding along the side of the microtubule. During interphase, required for the polarization of cytoplasmic microtubules where it orients the microtubule plus ends toward the cell ends and the minus ends toward the cell center. Required for karyogamy. This Schizosaccharomyces pombe (strain 972 / ATCC 24843) (Fission yeast) protein is Kinesin-like protein 2.